The following is an 88-amino-acid chain: MLDKEKKAEIINKFKLHETDTGSPEVQIALLTERINRLTEHLQVHKKDHHSRRGLLKMVGQRRALLNYLMKKDINRYRAIIEKLDLRK.

Belongs to the universal ribosomal protein uS15 family. In terms of assembly, part of the 30S ribosomal subunit. Forms a bridge to the 50S subunit in the 70S ribosome, contacting the 23S rRNA.

One of the primary rRNA binding proteins, it binds directly to 16S rRNA where it helps nucleate assembly of the platform of the 30S subunit by binding and bridging several RNA helices of the 16S rRNA. Its function is as follows. Forms an intersubunit bridge (bridge B4) with the 23S rRNA of the 50S subunit in the ribosome. The chain is Small ribosomal subunit protein uS15 from Caldanaerobacter subterraneus subsp. tengcongensis (strain DSM 15242 / JCM 11007 / NBRC 100824 / MB4) (Thermoanaerobacter tengcongensis).